A 198-amino-acid polypeptide reads, in one-letter code: FMN-dependent NADH:quinone oxidoreductase (198 aa).

FMN contacts are provided by residues Ser-10 and 16 to 18; that span reads SIS.

It belongs to the azoreductase type 1 family. In terms of assembly, homodimer. FMN serves as cofactor.

The catalysed reaction is 2 a quinone + NADH + H(+) = 2 a 1,4-benzosemiquinone + NAD(+). It catalyses the reaction N,N-dimethyl-1,4-phenylenediamine + anthranilate + 2 NAD(+) = 2-(4-dimethylaminophenyl)diazenylbenzoate + 2 NADH + 2 H(+). In terms of biological role, quinone reductase that provides resistance to thiol-specific stress caused by electrophilic quinones. Functionally, also exhibits azoreductase activity. Catalyzes the reductive cleavage of the azo bond in aromatic azo compounds to the corresponding amines. This chain is FMN-dependent NADH:quinone oxidoreductase, found in Mycoplasmopsis pulmonis (strain UAB CTIP) (Mycoplasma pulmonis).